Here is a 435-residue protein sequence, read N- to C-terminus: GTPase Der (435 aa).

EngA-type G domains lie at 4–167 and 175–350; these read PVVA…PAEK and ISFS…DNQN. GTP contacts are provided by residues 10–17, 57–61, 119–122, 181–188, 228–232, and 293–296; these read GQPNVGKS, DTGGI, NKAD, GRPNVGKS, DTAGI, and NKWD. Residues 351-435 form the KH-like domain; the sequence is QRIQSSVLND…PIKILPRKRK (85 aa).

This sequence belongs to the TRAFAC class TrmE-Era-EngA-EngB-Septin-like GTPase superfamily. EngA (Der) GTPase family. As to quaternary structure, associates with the 50S ribosomal subunit.

Functionally, GTPase that plays an essential role in the late steps of ribosome biogenesis. The sequence is that of GTPase Der from Lactobacillus acidophilus (strain ATCC 700396 / NCK56 / N2 / NCFM).